The primary structure comprises 87 residues: Probable Fe(2+)-trafficking protein (87 aa).

It belongs to the Fe(2+)-trafficking protein family.

Functionally, could be a mediator in iron transactions between iron acquisition and iron-requiring processes, such as synthesis and/or repair of Fe-S clusters in biosynthetic enzymes. This Francisella tularensis subsp. mediasiatica (strain FSC147) protein is Probable Fe(2+)-trafficking protein.